Here is a 203-residue protein sequence, read N- to C-terminus: Protein GrpE 2 (203 aa).

Basic and acidic residues predominate over residues 1–12 (MPTRPQEPDRAA). The segment at 1-64 (MPTRPQEPDR…APAEDEYTTA (64 aa)) is disordered. Over residues 45 to 56 (GEPGPDAAGPAP) the composition is skewed to low complexity.

It belongs to the GrpE family. In terms of assembly, homodimer.

It localises to the cytoplasm. Participates actively in the response to hyperosmotic and heat shock by preventing the aggregation of stress-denatured proteins, in association with DnaK and GrpE. It is the nucleotide exchange factor for DnaK and may function as a thermosensor. Unfolded proteins bind initially to DnaJ; upon interaction with the DnaJ-bound protein, DnaK hydrolyzes its bound ATP, resulting in the formation of a stable complex. GrpE releases ADP from DnaK; ATP binding to DnaK triggers the release of the substrate protein, thus completing the reaction cycle. Several rounds of ATP-dependent interactions between DnaJ, DnaK and GrpE are required for fully efficient folding. The protein is Protein GrpE 2 of Streptomyces avermitilis (strain ATCC 31267 / DSM 46492 / JCM 5070 / NBRC 14893 / NCIMB 12804 / NRRL 8165 / MA-4680).